The chain runs to 216 residues: GTP cyclohydrolase-2 (216 aa).

51-55 (RIHSE) is a GTP binding site. Zn(2+) is bound by residues C56, C67, and C69. Residues Q72, 94–96 (EGR), and T116 contribute to the GTP site. D128 functions as the Proton acceptor in the catalytic mechanism. The active-site Nucleophile is R130. 2 residues coordinate GTP: T151 and K156.

It belongs to the GTP cyclohydrolase II family. Zn(2+) serves as cofactor.

It catalyses the reaction GTP + 4 H2O = 2,5-diamino-6-hydroxy-4-(5-phosphoribosylamino)-pyrimidine + formate + 2 phosphate + 3 H(+). It functions in the pathway cofactor biosynthesis; riboflavin biosynthesis; 5-amino-6-(D-ribitylamino)uracil from GTP: step 1/4. Catalyzes the conversion of GTP to 2,5-diamino-6-ribosylamino-4(3H)-pyrimidinone 5'-phosphate (DARP), formate and pyrophosphate. This Haemophilus influenzae (strain PittEE) protein is GTP cyclohydrolase-2.